Here is a 105-residue protein sequence, read N- to C-terminus: Phosphoribosyl-ATP pyrophosphatase (105 aa).

Belongs to the PRA-PH family.

It localises to the cytoplasm. It catalyses the reaction 1-(5-phospho-beta-D-ribosyl)-ATP + H2O = 1-(5-phospho-beta-D-ribosyl)-5'-AMP + diphosphate + H(+). The protein operates within amino-acid biosynthesis; L-histidine biosynthesis; L-histidine from 5-phospho-alpha-D-ribose 1-diphosphate: step 2/9. This Ruthia magnifica subsp. Calyptogena magnifica protein is Phosphoribosyl-ATP pyrophosphatase.